The primary structure comprises 170 residues: Cathelicidin antimicrobial peptide (170 aa).

A signal peptide spans 1 to 30 (MKTQRHGPSLGRWSLVLLLLGLVMPLAIVA). Positions 31-131 (QVLSYQEAVL…DISCDKDNRR (101 aa)) are cleaved as a propeptide — cathelin-like domain (CLD). Intrachain disulfides connect Cys-86-Cys-97 and Cys-108-Cys-125. The active core stretch occupies residues 150–162 (LKKIGQKIKDFWG).

It belongs to the cathelicidin family. In terms of assembly, monomer, homodimer or homotrimer (in vitro). Oligomerizes as tetra- or hexamer in solution (in vitro). Proteolytically cleaved by proteinase PRTN3 into antibacterial peptide LL-37. Proteolytically cleaved by cathepsin CTSG and neutrophil elastase ELANE. Post-translationally, resistant to proteolytic degradation in solution, and when bound to both zwitterionic (mimicking mammalian membranes) and negatively charged membranes (mimicking bacterial membranes). In terms of processing, after secretion onto the skin surface, the CAMP gene product is processed by a serine protease-dependent mechanism into multiple novel antimicrobial peptides distinct from and shorter than cathelicidin LL-37. These peptides show enhanced antimicrobial action, acquiring the ability to kill skin pathogens such as S.aureus, E.coli and C.albicans. These peptides have lost the ability to stimulate CXCL8/IL8 release from keratinocytes. The peptides act synergistically, killing bacteria at lower concentrations when present together, and maintain activity at increased salt condition.

Its subcellular location is the secreted. It localises to the vesicle. Its function is as follows. Antimicrobial protein that is an integral component of the innate immune system. Binds to bacterial lipopolysaccharides (LPS). Acts via neutrophil N-formyl peptide receptors to enhance the release of CXCL2. Postsecretory processing generates multiple cathelicidin antimicrobial peptides with various lengths which act as a topical antimicrobial defense in sweat on skin. The unprocessed precursor form, cathelicidin antimicrobial peptide, inhibits the growth of Gram-negative E.coli and E.aerogenes with efficiencies comparable to that of the mature peptide LL-37 (in vitro). In terms of biological role, antimicrobial peptide that is an integral component of the innate immune system. Binds to bacterial lipopolysaccharides (LPS). Causes membrane permeabilization by forming transmembrane pores (in vitro). Causes lysis of E.coli. Exhibits antimicrobial activity against Gram-negative bacteria such as P.aeruginosa, S.typhimurium, E.aerogenes, E.coli and P.syringae, Gram-positive bacteria such as L.monocytogenes, S.epidermidis, S.pyogenes and S.aureus, as well as vancomycin-resistant enterococci (in vitro). Exhibits antimicrobial activity against methicillin-resistant S.aureus, P.mirabilis, and C.albicans in low-salt media, but not in media containing 100 mM NaCl (in vitro). Forms chiral supramolecular assemblies with quinolone signal (PQS) molecules of P.aeruginosa, which may lead to interference of bacterial quorum signaling and perturbance of bacterial biofilm formation. May form supramolecular fiber-like assemblies on bacterial membranes. Induces cytokine and chemokine producation as well as TNF/TNFA and CSF2/GMCSF production in normal human keratinocytes. Exhibits hemolytic activity against red blood cells. Exhibits antimicrobial activity against E.coli and B.megaterium (in vitro). The chain is Cathelicidin antimicrobial peptide from Trachypithecus cristatus (Silvered leaf-monkey).